The sequence spans 435 residues: Aspartate aminotransferase (435 aa).

Pyridoxal 5'-phosphate-binding positions include tyrosine 69 and 100–101 (SL). 139-141 (YDR) contributes to the substrate binding site. Pyridoxal 5'-phosphate is bound by residues asparagine 189, tyrosine 221, and 254–256 (STS). Residue arginine 392 coordinates substrate.

Belongs to the class-I pyridoxal-phosphate-dependent aminotransferase family. Requires pyridoxal 5'-phosphate as cofactor.

It carries out the reaction L-aspartate + 2-oxoglutarate = oxaloacetate + L-glutamate. Its function is as follows. Main aspartate aminotransferase that couples nitrogen assimilation to aspartate synthesis. Has a weak, but significant, side activity toward kynurenine (Kyn). Oxaloacetate and 2-oxoglutarate, but not pyruvate, serve as amino acceptors, while Asp, Glu and Kyn serve as the best amino donors. Essential for axenic growth and survival of M.tuberculosis in macrophages and in mice. In Mycobacterium tuberculosis (strain ATCC 25618 / H37Rv), this protein is Aspartate aminotransferase.